We begin with the raw amino-acid sequence, 164 residues long: Transcriptional repressor NrdR (164 aa).

The segment at 3–34 (CPFCRHEDSRVVDSRSLDDGSAIRRRRQCQAC) is a zinc-finger region. Residues 46-136 (LTVVKRSGVA…VYRDFESLDD (91 aa)) enclose the ATP-cone domain.

It belongs to the NrdR family. Requires Zn(2+) as cofactor.

Functionally, negatively regulates transcription of bacterial ribonucleotide reductase nrd genes and operons by binding to NrdR-boxes. The sequence is that of Transcriptional repressor NrdR from Micrococcus luteus (strain ATCC 4698 / DSM 20030 / JCM 1464 / CCM 169 / CCUG 5858 / IAM 1056 / NBRC 3333 / NCIMB 9278 / NCTC 2665 / VKM Ac-2230) (Micrococcus lysodeikticus).